A 262-amino-acid chain; its full sequence is Troponin T, slow skeletal muscle (262 aa).

Over residues 1-31 the composition is skewed to acidic residues; it reads MSDTEEQEYEEEQAEDEEAVEEEEAPEEPEP. 2 disordered regions span residues 1–62 and 109–153; these read MSDT…ERVD and ERAE…KKKV. At Ser-2 the chain carries Phosphoserine; by CK2. Residues 32 to 41 are compositionally biased toward basic and acidic residues; that stretch reads VAEREEERPK. Residues 43–55 are compositionally biased toward pro residues; the sequence is SRPVVPPLIPPKI. Positions 109 to 149 are enriched in basic and acidic residues; sequence ERAEQQRFRTEKERERQAKLAEEKMRKEEEEAKKRAEDDAK.

Belongs to the troponin T family. In terms of assembly, interacts with TPM3. Expressed in adult soleus muscle.

Its function is as follows. Troponin T is the tropomyosin-binding subunit of troponin, the thin filament regulatory complex which confers calcium-sensitivity to striated muscle actomyosin ATPase activity. This is Troponin T, slow skeletal muscle (Tnnt1) from Mus musculus (Mouse).